The chain runs to 144 residues: Large ribosomal subunit protein uL15 (144 aa).

Positions 1–48 (MIKLEYLQDPSPRKRRTKLLGRGPSSGHGKTSGRGHKGDGSRSGYKRR) are disordered.

The protein belongs to the universal ribosomal protein uL15 family. In terms of assembly, part of the 50S ribosomal subunit.

Its function is as follows. Binds to the 23S rRNA. This is Large ribosomal subunit protein uL15 from Chlamydia muridarum (strain MoPn / Nigg).